Here is a 766-residue protein sequence, read N- to C-terminus: MQAAKPLYDYPKYWAECFGPAPFLPMSREEMDLLGWDSCDIIIVTGDAYVDHPSFGMAIIGRLLEAQGFRVGIIAQPNWQSKDDFMKLGEPNLFFGVAAGNMDSMINRYTADKKIRSDDAYTPGGLAGSRPDRASLVYSQRCKEAYKHVPIVLGGIEASLRRIAHYDYWQDKVRHSILIDASADILLFGNAERAVVEVAQRLSNGEKIETITDVRGTAFVRRDTPQGWYEIDSTRIDRPGRVDKIINPYVNTQDTQACAIEQAKGDQEDPNEAKVVQILDSPAVTREKSVIRLPSFEKVRNDPVLYAHANRVLHLETNPGNARALVQKHGEVDVWFNPPPIPMSTEEMDYVFGMPYARVPHPAYGKERIPAYEMIRFSVNIMRGCFGGCTFCSITEHEGRIIQNRSHESILHEIEEMRDKVPGFTGVVSDLGGPTANMYRIACKSPEIEKYCRKPSCVFPGICENLNTDHSSLIELYRKARALPGVKKILIASGLRYDLAVESPEYVKELVTHHVGGYLKIAPEHTERGPLDKMMKPGIGTYDRFKRMFEKFSKEAGKEQYLIPYFIAAHPGTTDEDMMNLALWLKGNGFRADQVQAFYPSPMASATAMYHSGKNPLRKVTYKSEGVEIVKSDEQRRLHKAFLRYHDPKGWPMLREALQRMGRADLIGPGKHQLIPLHQPQTDTYQSARRKNSTPAGSHKVGKDQKILTQHTGLPPRGSDGSKPWDKREKAKAEAFARNQQAAKERKEASKGGKGNKKPRQPVIPR.

The Radical SAM core domain occupies 371-649; that stretch reads AYEMIRFSVN…KAFLRYHDPK (279 aa). Cys-385, Cys-389, and Cys-392 together coordinate [4Fe-4S] cluster. Positions 670–766 are disordered; the sequence is GKHQLIPLHQ…KKPRQPVIPR (97 aa). Residues 723 to 735 are compositionally biased toward basic and acidic residues; the sequence is KPWDKREKAKAEA.

The protein belongs to the UPF0313 family. Requires [4Fe-4S] cluster as cofactor.

This chain is UPF0313 protein PP_4872, found in Pseudomonas putida (strain ATCC 47054 / DSM 6125 / CFBP 8728 / NCIMB 11950 / KT2440).